We begin with the raw amino-acid sequence, 291 residues long: S-methyl-5'-thioadenosine phosphorylase (291 aa).

Phosphate is bound by residues Ser12, 54 to 55, and 87 to 88; these read RH and SA. Met185 contributes to the substrate binding site. A phosphate-binding site is contributed by Thr186. 209 to 211 contacts substrate; the sequence is DFD.

The protein belongs to the PNP/MTAP phosphorylase family. MTAP subfamily. In terms of assembly, homohexamer. Dimer of a homotrimer.

It catalyses the reaction S-methyl-5'-thioadenosine + phosphate = 5-(methylsulfanyl)-alpha-D-ribose 1-phosphate + adenine. The protein operates within amino-acid biosynthesis; L-methionine biosynthesis via salvage pathway; S-methyl-5-thio-alpha-D-ribose 1-phosphate from S-methyl-5'-thioadenosine (phosphorylase route): step 1/1. In terms of biological role, catalyzes the reversible phosphorylation of S-methyl-5'-thioadenosine (MTA) to adenine and 5-methylthioribose-1-phosphate. Involved in the breakdown of MTA, a major by-product of polyamine biosynthesis. Responsible for the first step in the methionine salvage pathway after MTA has been generated from S-adenosylmethionine. Has broad substrate specificity with 6-aminopurine nucleosides as preferred substrates. The protein is S-methyl-5'-thioadenosine phosphorylase of Bradyrhizobium diazoefficiens (strain JCM 10833 / BCRC 13528 / IAM 13628 / NBRC 14792 / USDA 110).